The following is a 578-amino-acid chain: Protein LIKE EARLY STARVATION, chloroplastic (578 aa).

A chloroplast-targeting transit peptide spans Met1 to Arg56. 2 disordered regions span residues Asn146–Val166 and Ser187–Gln206.

This sequence belongs to the ESV1 family. In terms of tissue distribution, expressed ubiquitously.

The protein resides in the plastid. Its subcellular location is the chloroplast stroma. In terms of biological role, binds preferentially to highly ordered alpha-glucans, such as starch and crystalline maltodextrins. Involved in the organization of the starch granule matrix, thus influencing starch turnover by modulating the accessibility of starch polymers to modifying and degrading enzymes involved in phosphorylation, hydrolyzes and synthesis, including starch synthases (SSI and SSIII), starch phosphorylases (PHS1), isoamylase, beta-amylase, glucan water dikinase (GWD) and phosphoglucan water dikinase (PWD). This Arabidopsis thaliana (Mouse-ear cress) protein is Protein LIKE EARLY STARVATION, chloroplastic.